We begin with the raw amino-acid sequence, 254 residues long: Imidazole glycerol phosphate synthase subunit HisF (254 aa).

Residues D12 and D131 contribute to the active site.

Belongs to the HisA/HisF family. As to quaternary structure, heterodimer of HisH and HisF.

It is found in the cytoplasm. It catalyses the reaction 5-[(5-phospho-1-deoxy-D-ribulos-1-ylimino)methylamino]-1-(5-phospho-beta-D-ribosyl)imidazole-4-carboxamide + L-glutamine = D-erythro-1-(imidazol-4-yl)glycerol 3-phosphate + 5-amino-1-(5-phospho-beta-D-ribosyl)imidazole-4-carboxamide + L-glutamate + H(+). It functions in the pathway amino-acid biosynthesis; L-histidine biosynthesis; L-histidine from 5-phospho-alpha-D-ribose 1-diphosphate: step 5/9. In terms of biological role, IGPS catalyzes the conversion of PRFAR and glutamine to IGP, AICAR and glutamate. The HisF subunit catalyzes the cyclization activity that produces IGP and AICAR from PRFAR using the ammonia provided by the HisH subunit. This is Imidazole glycerol phosphate synthase subunit HisF from Janthinobacterium sp. (strain Marseille) (Minibacterium massiliensis).